The following is a 102-amino-acid chain: NADH-quinone oxidoreductase subunit K (102 aa).

3 helical membrane passes run Leu5–Leu25, Ile31–Phe51, and Val62–Leu82.

This sequence belongs to the complex I subunit 4L family. In terms of assembly, NDH-1 is composed of 14 different subunits. Subunits NuoA, H, J, K, L, M, N constitute the membrane sector of the complex.

It localises to the cell inner membrane. The enzyme catalyses a quinone + NADH + 5 H(+)(in) = a quinol + NAD(+) + 4 H(+)(out). Its function is as follows. NDH-1 shuttles electrons from NADH, via FMN and iron-sulfur (Fe-S) centers, to quinones in the respiratory chain. The immediate electron acceptor for the enzyme in this species is believed to be ubiquinone. Couples the redox reaction to proton translocation (for every two electrons transferred, four hydrogen ions are translocated across the cytoplasmic membrane), and thus conserves the redox energy in a proton gradient. The sequence is that of NADH-quinone oxidoreductase subunit K from Bordetella avium (strain 197N).